A 490-amino-acid chain; its full sequence is Aspartyl/glutamyl-tRNA(Asn/Gln) amidotransferase subunit B (490 aa).

The protein belongs to the GatB/GatE family. GatB subfamily. As to quaternary structure, heterotrimer of A, B and C subunits.

It carries out the reaction L-glutamyl-tRNA(Gln) + L-glutamine + ATP + H2O = L-glutaminyl-tRNA(Gln) + L-glutamate + ADP + phosphate + H(+). The catalysed reaction is L-aspartyl-tRNA(Asn) + L-glutamine + ATP + H2O = L-asparaginyl-tRNA(Asn) + L-glutamate + ADP + phosphate + 2 H(+). Allows the formation of correctly charged Asn-tRNA(Asn) or Gln-tRNA(Gln) through the transamidation of misacylated Asp-tRNA(Asn) or Glu-tRNA(Gln) in organisms which lack either or both of asparaginyl-tRNA or glutaminyl-tRNA synthetases. The reaction takes place in the presence of glutamine and ATP through an activated phospho-Asp-tRNA(Asn) or phospho-Glu-tRNA(Gln). The protein is Aspartyl/glutamyl-tRNA(Asn/Gln) amidotransferase subunit B of Prochlorococcus marinus subsp. pastoris (strain CCMP1986 / NIES-2087 / MED4).